The chain runs to 764 residues: DNA polymerase 3 (764 aa).

The protein belongs to the DNA polymerase type-B family.

The catalysed reaction is DNA(n) + a 2'-deoxyribonucleoside 5'-triphosphate = DNA(n+1) + diphosphate. The protein is DNA polymerase 3 (dpo3) of Saccharolobus solfataricus (strain ATCC 35092 / DSM 1617 / JCM 11322 / P2) (Sulfolobus solfataricus).